The chain runs to 326 residues: AA9 family lytic polysaccharide monooxygenase B (326 aa).

The N-terminal stretch at 1–19 is a signal peptide; that stretch reads MKSFTIAALAALWAQEAAA. 2 residues coordinate Cu(2+): His-20 and His-98. Cys-57 and Cys-192 form a disulfide bridge. Residues His-178 and Gln-187 each contribute to the O2 site. Cu(2+) is bound at residue Tyr-189. Positions 265–281 are enriched in low complexity; sequence PSATLTQPTSTATATSA. The tract at residues 265-286 is disordered; that stretch reads PSATLTQPTSTATATSAPGGGG. The region spanning 289 to 326 is the CBM1 domain; it reads CTAAKYQQCGGTGYTGCTTCASGSTCSAVSPPYYSQCL.

Belongs to the polysaccharide monooxygenase AA9 family. It depends on Cu(2+) as a cofactor.

It is found in the secreted. The catalysed reaction is [(1-&gt;4)-beta-D-glucosyl]n+m + reduced acceptor + O2 = 4-dehydro-beta-D-glucosyl-[(1-&gt;4)-beta-D-glucosyl]n-1 + [(1-&gt;4)-beta-D-glucosyl]m + acceptor + H2O.. Functionally, lytic polysaccharide monooxygenase (LPMO) that depolymerizes crystalline and amorphous polysaccharides via the oxidation of scissile alpha- or beta-(1-4)-glycosidic bonds, yielding C1 and C4 oxidation products. Catalysis by LPMOs requires the reduction of the active-site copper from Cu(II) to Cu(I) by a reducing agent and H(2)O(2) or O(2) as a cosubstrate. Shows no activity on wheat arabinoxylan, konjac glucomannan, acetylated spruce galactoglucomannan, or cellopentaose. The chain is AA9 family lytic polysaccharide monooxygenase B from Thermothielavioides terrestris (strain ATCC 38088 / NRRL 8126) (Thielavia terrestris).